Here is a 276-residue protein sequence, read N- to C-terminus: Formamidopyrimidine-DNA glycosylase (276 aa).

Proline 2 functions as the Schiff-base intermediate with DNA in the catalytic mechanism. The active-site Proton donor is the glutamate 3. Residue lysine 59 is the Proton donor; for beta-elimination activity of the active site. 3 residues coordinate DNA: histidine 93, arginine 112, and arginine 155. The FPG-type zinc-finger motif lies at 240-274 (QVYNREGKPCPRCGDKIAKKKVGGRSSYYCPTCQK). Arginine 264 (proton donor; for delta-elimination activity) is an active-site residue.

The protein belongs to the FPG family. As to quaternary structure, monomer. The cofactor is Zn(2+).

It carries out the reaction Hydrolysis of DNA containing ring-opened 7-methylguanine residues, releasing 2,6-diamino-4-hydroxy-5-(N-methyl)formamidopyrimidine.. The enzyme catalyses 2'-deoxyribonucleotide-(2'-deoxyribose 5'-phosphate)-2'-deoxyribonucleotide-DNA = a 3'-end 2'-deoxyribonucleotide-(2,3-dehydro-2,3-deoxyribose 5'-phosphate)-DNA + a 5'-end 5'-phospho-2'-deoxyribonucleoside-DNA + H(+). Its function is as follows. Involved in base excision repair of DNA damaged by oxidation or by mutagenic agents. Acts as a DNA glycosylase that recognizes and removes damaged bases. Has a preference for oxidized purines, such as 7,8-dihydro-8-oxoguanine (8-oxoG). Has AP (apurinic/apyrimidinic) lyase activity and introduces nicks in the DNA strand. Cleaves the DNA backbone by beta-delta elimination to generate a single-strand break at the site of the removed base with both 3'- and 5'-phosphates. This chain is Formamidopyrimidine-DNA glycosylase, found in Pelotomaculum thermopropionicum (strain DSM 13744 / JCM 10971 / SI).